The following is a 339-amino-acid chain: Anthranilate phosphoribosyltransferase (339 aa).

5-phospho-alpha-D-ribose 1-diphosphate contacts are provided by residues Gly-86, 89–90, Thr-94, 96–99, 114–122, and Ser-126; these read GD, NIST, and KHGNRGVSS. Gly-86 lines the anthranilate pocket. Ser-98 contributes to the Mg(2+) binding site. Asn-117 contributes to the anthranilate binding site. Arg-172 is an anthranilate binding site. Mg(2+) contacts are provided by Asp-230 and Glu-231.

This sequence belongs to the anthranilate phosphoribosyltransferase family. Homodimer. Requires Mg(2+) as cofactor.

The enzyme catalyses N-(5-phospho-beta-D-ribosyl)anthranilate + diphosphate = 5-phospho-alpha-D-ribose 1-diphosphate + anthranilate. The protein operates within amino-acid biosynthesis; L-tryptophan biosynthesis; L-tryptophan from chorismate: step 2/5. In terms of biological role, catalyzes the transfer of the phosphoribosyl group of 5-phosphorylribose-1-pyrophosphate (PRPP) to anthranilate to yield N-(5'-phosphoribosyl)-anthranilate (PRA). This Photobacterium profundum (strain SS9) protein is Anthranilate phosphoribosyltransferase.